The sequence spans 145 residues: MKGLLQRVKGARVEVAGEVVGSVDQGLLVLVAVEPDDTPASADKLLHKLLNYRVFSDAEGKMNLSLADVGGGLLLVSQFTLAADTKSGLRPSFSTAAPPALGEKLFDYLLSRAKQMHGTVASGRFGADMQVHLVNDGPVTFLLQT.

The Gly-cisPro motif, important for rejection of L-amino acids signature appears at 137–138 (GP).

This sequence belongs to the DTD family. In terms of assembly, homodimer.

It is found in the cytoplasm. The catalysed reaction is glycyl-tRNA(Ala) + H2O = tRNA(Ala) + glycine + H(+). It catalyses the reaction a D-aminoacyl-tRNA + H2O = a tRNA + a D-alpha-amino acid + H(+). In terms of biological role, an aminoacyl-tRNA editing enzyme that deacylates mischarged D-aminoacyl-tRNAs. Also deacylates mischarged glycyl-tRNA(Ala), protecting cells against glycine mischarging by AlaRS. Acts via tRNA-based rather than protein-based catalysis; rejects L-amino acids rather than detecting D-amino acids in the active site. By recycling D-aminoacyl-tRNA to D-amino acids and free tRNA molecules, this enzyme counteracts the toxicity associated with the formation of D-aminoacyl-tRNA entities in vivo and helps enforce protein L-homochirality. This Pseudomonas fluorescens (strain Pf0-1) protein is D-aminoacyl-tRNA deacylase.